We begin with the raw amino-acid sequence, 446 residues long: Glutamine synthetase (446 aa).

Residues Arg15–Gly102 form the GS beta-grasp domain. The GS catalytic domain occupies Ser109–Leu446. Residues Glu132 and Glu134 each contribute to the Mg(2+) site. Glu184 contributes to the ATP binding site. The Mg(2+) site is built by Glu189 and Glu196. Gly241 contributes to the L-glutamate binding site. Position 245 (His245) interacts with Mg(2+). ATP is bound by residues His247–Ser249 and Ser249. L-glutamate contacts are provided by Arg298, Glu304, and Arg316. ATP-binding residues include Arg316 and Arg321. Glu336 is a binding site for Mg(2+). Arg338 lines the L-glutamate pocket. Residue Lys363 forms an Isoglutamyl lysine isopeptide (Lys-Gln) (interchain with Q-Cter in protein Pup) linkage.

The protein belongs to the glutamine synthetase family. Oligomer of 12 subunits arranged in the form of two hexagons. In its feedback-inhibited form, interacts with TnrA in order to block its DNA-binding activity. It depends on Mg(2+) as a cofactor.

It is found in the cytoplasm. The enzyme catalyses L-glutamate + NH4(+) + ATP = L-glutamine + ADP + phosphate + H(+). With respect to regulation, inhibited by glutamine. In terms of biological role, glutamine synthetase (GS) is an unusual multitasking protein that functions as an enzyme, a transcription coregulator, and a chaperone in ammonium assimilation and in the regulation of genes involved in nitrogen metabolism. It catalyzes the ATP-dependent biosynthesis of glutamine from glutamate and ammonia. Feedback-inhibited GlnA also interacts with and regulates the activity of the transcriptional regulator TnrA. During nitrogen limitation, TnrA is in its DNA-binding active state and turns on the transcription of genes required for nitrogen assimilation. Under conditions of nitrogen excess, feedback-inhibited GlnA forms a stable complex with TnrA, which inhibits its DNA-binding activity. In contrast, feedback-inhibited GlnA acts as a chaperone to stabilize the DNA-binding activity of GlnR, which represses the transcription of nitrogen assimilation genes. The protein is Glutamine synthetase of Mycolicibacterium smegmatis (strain ATCC 700084 / mc(2)155) (Mycobacterium smegmatis).